The following is a 50-amino-acid chain: NLYQFSNMIQCTIPGSDPLSDYGNYGCYCGYGGSGTPVDELLRCCQVHDD.

Residues Y28, G30, and G32 each coordinate Ca(2+). An intrachain disulfide couples C29 to C45. Residue H48 is part of the active site. D49 provides a ligand contact to Ca(2+).

It depends on Ca(2+) as a cofactor. As to expression, expressed by the venom gland.

Its subcellular location is the secreted. It catalyses the reaction a 1,2-diacyl-sn-glycero-3-phosphocholine + H2O = a 1-acyl-sn-glycero-3-phosphocholine + a fatty acid + H(+). Inhibited by EDTA. PLA2 catalyzes the calcium-dependent hydrolysis of the 2-acyl groups in 3-sn-phosphoglycerides. The sequence is that of Phospholipase A2 trimorphin from Trimorphodon lambda (Sonoran lyre snake).